The following is a 130-amino-acid chain: Small ribosomal subunit protein uS11 (130 aa).

It belongs to the universal ribosomal protein uS11 family. In terms of assembly, part of the 30S ribosomal subunit. Interacts with proteins S7 and S18. Binds to IF-3.

Its function is as follows. Located on the platform of the 30S subunit, it bridges several disparate RNA helices of the 16S rRNA. Forms part of the Shine-Dalgarno cleft in the 70S ribosome. The sequence is that of Small ribosomal subunit protein uS11 from Psychrobacter sp. (strain PRwf-1).